We begin with the raw amino-acid sequence, 260 residues long: MEAPVFNLEGEEVDTVELPSFFEEPVRKDLIRRAVLAAQANRRQPYGTDPRAGFRTSAESWGAGHGVAMVPRVKGRRHPAAGRAARVAQAVGGQKAHAPTPEKDWTQRVNRKERRAALRSALAATAKPEFVKERGHVIDDVPHLPVVVVDELKSLNKAREVREFFKSVGLWADVERAKSNRRIRAGKGKRRGRRYVKPKSVLIVVDEDEGIKLGARNHPGVDVVEAMHLGVEHLAPGAHPGRLTVFTPGALEVLEERLGE.

The protein belongs to the universal ribosomal protein uL4 family. Part of the 50S ribosomal subunit.

In terms of biological role, one of the primary rRNA binding proteins, this protein initially binds near the 5'-end of the 23S rRNA. It is important during the early stages of 50S assembly. It makes multiple contacts with different domains of the 23S rRNA in the assembled 50S subunit and ribosome. Functionally, forms part of the polypeptide exit tunnel. This Methanopyrus kandleri (strain AV19 / DSM 6324 / JCM 9639 / NBRC 100938) protein is Large ribosomal subunit protein uL4.